We begin with the raw amino-acid sequence, 401 residues long: 4-hydroxy-3-methylbut-2-enyl diphosphate reductase (401 aa).

A [4Fe-4S] cluster-binding site is contributed by cysteine 66. Histidine 96 is a (2E)-4-hydroxy-3-methylbut-2-enyl diphosphate binding site. Histidine 96 is a dimethylallyl diphosphate binding site. Histidine 96 is a binding site for isopentenyl diphosphate. Cysteine 157 is a binding site for [4Fe-4S] cluster. Histidine 185 lines the (2E)-4-hydroxy-3-methylbut-2-enyl diphosphate pocket. Dimethylallyl diphosphate is bound at residue histidine 185. Histidine 185 serves as a coordination point for isopentenyl diphosphate. Glutamate 187 serves as the catalytic Proton donor. Residue threonine 250 participates in (2E)-4-hydroxy-3-methylbut-2-enyl diphosphate binding. Residue cysteine 288 participates in [4Fe-4S] cluster binding. Residues serine 317, serine 318, asparagine 319, and serine 379 each contribute to the (2E)-4-hydroxy-3-methylbut-2-enyl diphosphate site. Dimethylallyl diphosphate-binding residues include serine 317, serine 318, asparagine 319, and serine 379. Residues serine 317, serine 318, asparagine 319, and serine 379 each contribute to the isopentenyl diphosphate site.

It belongs to the IspH family. [4Fe-4S] cluster serves as cofactor.

The catalysed reaction is isopentenyl diphosphate + 2 oxidized [2Fe-2S]-[ferredoxin] + H2O = (2E)-4-hydroxy-3-methylbut-2-enyl diphosphate + 2 reduced [2Fe-2S]-[ferredoxin] + 2 H(+). It catalyses the reaction dimethylallyl diphosphate + 2 oxidized [2Fe-2S]-[ferredoxin] + H2O = (2E)-4-hydroxy-3-methylbut-2-enyl diphosphate + 2 reduced [2Fe-2S]-[ferredoxin] + 2 H(+). The protein operates within isoprenoid biosynthesis; dimethylallyl diphosphate biosynthesis; dimethylallyl diphosphate from (2E)-4-hydroxy-3-methylbutenyl diphosphate: step 1/1. It functions in the pathway isoprenoid biosynthesis; isopentenyl diphosphate biosynthesis via DXP pathway; isopentenyl diphosphate from 1-deoxy-D-xylulose 5-phosphate: step 6/6. Catalyzes the conversion of 1-hydroxy-2-methyl-2-(E)-butenyl 4-diphosphate (HMBPP) into a mixture of isopentenyl diphosphate (IPP) and dimethylallyl diphosphate (DMAPP). Acts in the terminal step of the DOXP/MEP pathway for isoprenoid precursor biosynthesis. This Trichodesmium erythraeum (strain IMS101) protein is 4-hydroxy-3-methylbut-2-enyl diphosphate reductase.